The chain runs to 3564 residues: Sushi, von Willebrand factor type A, EGF and pentraxin domain-containing protein 1 (3564 aa).

The first 17 residues, 1 to 17, serve as a signal peptide directing secretion; that stretch reads MWTRLAFCCWALALVSG. A VWFA domain is found at 84–265; it reads ELVFLVDESS…LARRALHEDL (182 aa). Asparagine 187 is a glycosylation site (N-linked (GlcNAc...) asparagine). Sushi domains follow at residues 377 to 436, 437 to 496, and 497 to 561; these read VHCP…FCRV, RTCP…RCVE, and RHCA…VCKD. Intrachain disulfides connect cysteine 379/cysteine 421, cysteine 407/cysteine 434, cysteine 439/cysteine 481, cysteine 467/cysteine 494, cysteine 499/cysteine 544, and cysteine 530/cysteine 559. HYR domains lie at 560–644 and 645–724; these read KDVE…KVID and VEPP…VIKG. Residues 725–789 enclose the Sushi 4 domain; that stretch reads SPCEVPFTPV…YSTEWPDCAI (65 aa). 20 disulfide bridges follow: cysteine 727-cysteine 769, cysteine 753-cysteine 787, cysteine 1192-cysteine 1203, cysteine 1197-cysteine 1212, cysteine 1214-cysteine 1223, cysteine 1230-cysteine 1241, cysteine 1235-cysteine 1250, cysteine 1252-cysteine 1261, cysteine 1268-cysteine 1279, cysteine 1273-cysteine 1288, cysteine 1290-cysteine 1299, cysteine 1306-cysteine 1317, cysteine 1311-cysteine 1326, cysteine 1328-cysteine 1337, cysteine 1344-cysteine 1355, cysteine 1349-cysteine 1364, cysteine 1366-cysteine 1375, cysteine 1382-cysteine 1393, cysteine 1387-cysteine 1402, and cysteine 1404-cysteine 1413. Positions 1188–1224 constitute an EGF-like 1 domain; sequence VFHECFLNPCHNSGTCQQLGRGYVCLCPPGYTGLKCE. Residues 1226–1262 enclose the EGF-like 2; calcium-binding domain; the sequence is DIDECSSLPCLNGGICRDKVGGFTCECSSGYTGQICE. One can recognise an EGF-like 3; calcium-binding domain in the interval 1264–1300; the sequence is NINECSSSPCLNKGTCTDGLASYRCTCVSGYVGVHCE. The EGF-like 4; calcium-binding domain occupies 1302–1338; it reads DVNECQSSPCLNNAVCKDQVGGFSCKCPPGFLGTRCE. Positions 1340-1376 constitute an EGF-like 5; calcium-binding domain; that stretch reads NVDECLSQPCQNGATCKDGANSFRCQCPAGFTGPHCE. An EGF-like 6; calcium-binding domain is found at 1378–1414; the sequence is NINECQSNPCRNQATCVDELNSYSCKCRPGFSGRRCE. In terms of domain architecture, Pentraxin (PTX) spans 1419-1623; it reads SGFNLDFEVS…VKVDSSSIFC (205 aa). 2 Sushi domains span residues 1624-1682 and 1683-1740; these read SDCP…HCER and IRCG…SCLD. Disulfide bonds link cysteine 1626–cysteine 1667, cysteine 1653–cysteine 1680, cysteine 1685–cysteine 1725, cysteine 1711–cysteine 1738, cysteine 1744–cysteine 1756, cysteine 1750–cysteine 1765, cysteine 1767–cysteine 1778, cysteine 1784–cysteine 1824, cysteine 1810–cysteine 1837, cysteine 1842–cysteine 1882, cysteine 1868–cysteine 1895, cysteine 1900–cysteine 1940, cysteine 1926–cysteine 1953, cysteine 1958–cysteine 1998, cysteine 1984–cysteine 2011, cysteine 2016–cysteine 2056, cysteine 2042–cysteine 2073, cysteine 2078–cysteine 2121, cysteine 2107–cysteine 2136, cysteine 2141–cysteine 2181, cysteine 2167–cysteine 2194, cysteine 2199–cysteine 2240, cysteine 2226–cysteine 2254, cysteine 2259–cysteine 2299, cysteine 2285–cysteine 2313, cysteine 2318–cysteine 2358, cysteine 2344–cysteine 2371, cysteine 2376–cysteine 2417, cysteine 2403–cysteine 2430, cysteine 2435–cysteine 2475, cysteine 2461–cysteine 2488, cysteine 2493–cysteine 2533, cysteine 2519–cysteine 2546, cysteine 2551–cysteine 2591, and cysteine 2577–cysteine 2603. Residues 1740-1779 enclose the EGF-like 7; calcium-binding domain; the sequence is DVDECAVGSDCSEHASCLNTNGSYICSCKPPYTGDGKNCA. The N-linked (GlcNAc...) asparagine glycan is linked to asparagine 1760. Sushi domains lie at 1776-1839, 1840-1897, 1898-1955, 1956-2013, 2014-2075, 2076-2138, 2139-2196, 2197-2256, 2257-2315, 2316-2373, 2374-2432, 2433-2490, 2491-2548, and 2549-2605; these read KNCA…SCEA, ISCG…VCEL, VKCS…SCQL, VSCG…QCLA, VSCD…RCIA, HFCE…QCIP, VRCG…TCHP, VSCN…SCTP, LNCG…KCVP, TKCA…VCKL, VLCQ…ECVP, VECP…MCRP, IECP…SCNA, and IHCS…TCVP. The segment at 2634-2641 is important for the interaction with integrin ITGA9:ITGB1; sequence DMMEVPYL. 14 consecutive Sushi domains span residues 2659 to 2708, 2709 to 2766, 2767 to 2824, 2825 to 2882, 2883 to 2940, 2941 to 2998, 2999 to 3054, 3055 to 3112, 3113 to 3171, 3172 to 3231, 3232 to 3289, 3290 to 3347, 3348 to 3406, and 3407 to 3463; these read EESL…SCIS, IECD…RCEV, ISCS…VCLP, VDCG…SCVP, VRCP…ICKP, ATCG…SCLP, CTCS…LCEH, ADCG…TCEP, VSCG…NCSP, KTCP…SCIP, VVCG…VCRE, SRCE…LCKP, NPCP…RCEK, and ISCG…ICRA. Cystine bridges form between cysteine 2679/cysteine 2706, cysteine 2711/cysteine 2751, cysteine 2737/cysteine 2764, cysteine 2769/cysteine 2809, cysteine 2795/cysteine 2822, cysteine 2827/cysteine 2867, cysteine 2853/cysteine 2880, cysteine 2885/cysteine 2925, cysteine 2911/cysteine 2938, cysteine 2943/cysteine 2983, cysteine 2969/cysteine 2996, cysteine 3001/cysteine 3040, cysteine 3026/cysteine 3052, cysteine 3057/cysteine 3097, cysteine 3083/cysteine 3110, cysteine 3115/cysteine 3156, cysteine 3141/cysteine 3169, cysteine 3174/cysteine 3214, cysteine 3200/cysteine 3229, cysteine 3234/cysteine 3274, cysteine 3260/cysteine 3287, cysteine 3292/cysteine 3332, cysteine 3318/cysteine 3345, cysteine 3350/cysteine 3391, cysteine 3377/cysteine 3404, cysteine 3409/cysteine 3449, cysteine 3435/cysteine 3461, cysteine 3497/cysteine 3507, cysteine 3501/cysteine 3513, cysteine 3515/cysteine 3524, cysteine 3529/cysteine 3539, cysteine 3533/cysteine 3545, and cysteine 3547/cysteine 3556. EGF-like domains lie at 3493 to 3525 and 3526 to 3557; these read EEPI…SRCH and TATC…HDCS.

In terms of assembly, interacts (via Sushi domain 21) with ITGA9:ITGB1; thereby inhibits Ca(2+) intracellular signaling and as a result represses vasocontraction. Interacts (via Sushi domain 21) with ITGA4:ITGB1; thereby inhibits Ca(2+) intracellular signaling and as a result represses vasocontraction. Interacts with ANGPT1 and ANGPT2. Interacts with PEAR1 (via extracellular domain). Interacts with HSPG2, TLN1, FN1, COPA, CCT2, IQGAP1, LAMC1 and NID1. Interacts (via C-terminus) with TIE1.

It localises to the secreted. The protein resides in the nucleus. Its subcellular location is the cytoplasm. It is found in the membrane. Required for morphological development, cell alignment and migration of lymphatic endothelial cells during embryonic development, potentially via modulation of ANGPT2-TIE1 signaling and subsequent activation of FOXC2 transcription. Required for embryonic lymphatic vascular development, via mediating the correct formation of the first lymphovenous contact site and tight association of the lymphatic endothelium with the venous endothelium. Represses PRKCA-mediated L-type voltage-gated channel Ca(2+) influx and ROCK-mediated calcium sensitivity in vascular smooth muscle cells, via its interaction with integrins, thereby inhibiting vasocontraction. Promotes platelet activation, via its interaction with PEAR1 and subsequent activation of AKT/mTOR signaling. Plays a role in epidermal development and keratinocyte differentiation, independent of cell-cell adhesion. May play a role in initial cell attachment of stromal osteogenic cells. May promote myoblast cell adhesion when in the presence of integrin ITGA9:ITGB1. The protein is Sushi, von Willebrand factor type A, EGF and pentraxin domain-containing protein 1 (Svep1) of Rattus norvegicus (Rat).